Here is a 244-residue protein sequence, read N- to C-terminus: Small ribosomal subunit protein eS4 (244 aa).

Residues 43-106 (LPLLLVVRDV…DETYLVLFDE (64 aa)) form the S4 RNA-binding domain.

This sequence belongs to the eukaryotic ribosomal protein eS4 family.

This chain is Small ribosomal subunit protein eS4, found in Methanococcus maripaludis (strain DSM 14266 / JCM 13030 / NBRC 101832 / S2 / LL).